The primary structure comprises 79 residues: Short neurotoxin 2 (79 aa).

Residues 1–19 (PLLLTLVVVTIVCLDLGYT) form the signal peptide. 4 disulfides stabilise this stretch: Cys22–Cys41, Cys36–Cys58, Cys60–Cys71, and Cys72–Cys77.

It belongs to the three-finger toxin family. Short-chain subfamily. Type I alpha-neurotoxin sub-subfamily. As to expression, expressed by the venom gland.

The protein localises to the secreted. In terms of biological role, binds to muscle nicotinic acetylcholine receptor (nAChR) and inhibit acetylcholine from binding to the receptor, thereby impairing neuromuscular transmission. In Hydrophis cyanocinctus (Asian annulated sea snake), this protein is Short neurotoxin 2.